The sequence spans 949 residues: Pyruvate, phosphate dikinase, chloroplastic (949 aa).

Residues 1-74 constitute a chloroplast transit peptide; that stretch reads MASAFKGILI…VMAPASDPTS (74 aa). T530 carries the phosphothreonine; by PDRP1 modification. The Tele-phosphohistidine intermediate role is filled by H532. Residues R638, R695, E824, G845, T846, N847, and D848 each coordinate substrate. Mg(2+) is bound at residue E824. Residue D848 coordinates Mg(2+). C910 serves as the catalytic Proton donor.

Belongs to the PEP-utilizing enzyme family. In terms of assembly, homodimer. Mg(2+) serves as cofactor. Post-translationally, phosphorylation of Thr-530 in the dark inactivates the enzyme. Dephosphorylation upon light stimulation reactivates the enzyme.

It localises to the plastid. The protein resides in the chloroplast. The catalysed reaction is pyruvate + phosphate + ATP = phosphoenolpyruvate + AMP + diphosphate + H(+). Its activity is regulated as follows. Activated by light-induced dephosphorylation. Inhibited by dark-induced phosphorylation. Both reactions are catalyzed by PDRP1. In terms of biological role, formation of phosphoenolpyruvate, which is the primary acceptor of CO(2) in C4 and some Crassulacean acid metabolism plants. This is Pyruvate, phosphate dikinase, chloroplastic (PPD) from Mesembryanthemum crystallinum (Common ice plant).